A 401-amino-acid polypeptide reads, in one-letter code: tRNA(Met) cytidine acetate ligase (401 aa).

ATP-binding positions include 7–20 (IVEYNPFHNGHLYH), Gly-102, Asn-164, and Arg-189.

The protein belongs to the TmcAL family.

It is found in the cytoplasm. It carries out the reaction cytidine(34) in elongator tRNA(Met) + acetate + ATP = N(4)-acetylcytidine(34) in elongator tRNA(Met) + AMP + diphosphate. Its function is as follows. Catalyzes the formation of N(4)-acetylcytidine (ac(4)C) at the wobble position of elongator tRNA(Met), using acetate and ATP as substrates. First activates an acetate ion to form acetyladenylate (Ac-AMP) and then transfers the acetyl group to tRNA to form ac(4)C34. The sequence is that of tRNA(Met) cytidine acetate ligase from Thermoanaerobacter sp. (strain X514).